We begin with the raw amino-acid sequence, 219 residues long: Orotate phosphoribosyltransferase (219 aa).

Position 26 (K26) interacts with 5-phospho-alpha-D-ribose 1-diphosphate. An orotate-binding site is contributed by 34-35 (FF). 5-phospho-alpha-D-ribose 1-diphosphate is bound by residues 72–73 (YK), R98, K99, K102, H104, and 124–132 (DDVITAGTA). Orotate is bound by residues T128 and R156.

This sequence belongs to the purine/pyrimidine phosphoribosyltransferase family. PyrE subfamily. Homodimer. The cofactor is Mg(2+).

It catalyses the reaction orotidine 5'-phosphate + diphosphate = orotate + 5-phospho-alpha-D-ribose 1-diphosphate. It participates in pyrimidine metabolism; UMP biosynthesis via de novo pathway; UMP from orotate: step 1/2. In terms of biological role, catalyzes the transfer of a ribosyl phosphate group from 5-phosphoribose 1-diphosphate to orotate, leading to the formation of orotidine monophosphate (OMP). This is Orotate phosphoribosyltransferase from Stenotrophomonas maltophilia (strain K279a).